We begin with the raw amino-acid sequence, 299 residues long: Tyrosine recombinase XerD (299 aa).

The region spanning 2–89 (ETVNNNLQQF…AIRSFHQFLL (88 aa)) is the Core-binding (CB) domain. The Tyr recombinase domain occupies 110–293 (RLPKALTIEE…TKTRMRDVYA (184 aa)). Residues Arg-150, Lys-174, His-245, Arg-248, and His-271 contribute to the active site. Tyr-280 functions as the O-(3'-phospho-DNA)-tyrosine intermediate in the catalytic mechanism.

This sequence belongs to the 'phage' integrase family. XerD subfamily. In terms of assembly, forms a cyclic heterotetrameric complex composed of two molecules of XerC and two molecules of XerD.

It localises to the cytoplasm. In terms of biological role, site-specific tyrosine recombinase, which acts by catalyzing the cutting and rejoining of the recombining DNA molecules. The XerC-XerD complex is essential to convert dimers of the bacterial chromosome into monomers to permit their segregation at cell division. It also contributes to the segregational stability of plasmids. The protein is Tyrosine recombinase XerD of Halalkalibacterium halodurans (strain ATCC BAA-125 / DSM 18197 / FERM 7344 / JCM 9153 / C-125) (Bacillus halodurans).